Consider the following 466-residue polypeptide: Ribulose bisphosphate carboxylase large chain (466 aa).

Lys5 bears the N6,N6,N6-trimethyllysine mark. Asn114 and Thr164 together coordinate substrate. Residue Lys166 is the Proton acceptor of the active site. Lys168 provides a ligand contact to substrate. 3 residues coordinate Mg(2+): Lys192, Asp194, and Glu195. Lys192 is subject to N6-carboxylysine. The Proton acceptor role is filled by His285. Substrate-binding residues include Arg286, His318, and Ser370.

This sequence belongs to the RuBisCO large chain family. Type I subfamily. Heterohexadecamer of 8 large chains and 8 small chains; disulfide-linked. The disulfide link is formed within the large subunit homodimers. Mg(2+) serves as cofactor. The disulfide bond which can form in the large chain dimeric partners within the hexadecamer appears to be associated with oxidative stress and protein turnover.

It is found in the plastid. Its subcellular location is the chloroplast. The catalysed reaction is 2 (2R)-3-phosphoglycerate + 2 H(+) = D-ribulose 1,5-bisphosphate + CO2 + H2O. It catalyses the reaction D-ribulose 1,5-bisphosphate + O2 = 2-phosphoglycolate + (2R)-3-phosphoglycerate + 2 H(+). Its function is as follows. RuBisCO catalyzes two reactions: the carboxylation of D-ribulose 1,5-bisphosphate, the primary event in carbon dioxide fixation, as well as the oxidative fragmentation of the pentose substrate in the photorespiration process. Both reactions occur simultaneously and in competition at the same active site. The protein is Ribulose bisphosphate carboxylase large chain of Betula nigra (River birch).